The chain runs to 162 residues: Ribosome maturation factor RimP (162 aa).

It belongs to the RimP family.

The protein resides in the cytoplasm. Its function is as follows. Required for maturation of 30S ribosomal subunits. The polypeptide is Ribosome maturation factor RimP (Beutenbergia cavernae (strain ATCC BAA-8 / DSM 12333 / CCUG 43141 / JCM 11478 / NBRC 16432 / NCIMB 13614 / HKI 0122)).